We begin with the raw amino-acid sequence, 519 residues long: DNA damage-binding protein CMR1 (519 aa).

A disordered region spans residues 35–92 (AEAGLGPTGKSRAAASSKPRVKKPAPKKIKQEDIAPRRTSSRLKGIEADSEKAKRKAE). Over residues 53-62 (PRVKKPAPKK) the composition is skewed to basic residues. Positions 78–92 (KGIEADSEKAKRKAE) are enriched in basic and acidic residues. WD repeat units follow at residues 240–280 (PHTR…AVEV), 287–327 (NEDQ…DQAE), 331–371 (LSEK…GKGD), 380–420 (EHES…EWAT), 442–485 (GRWV…LAQL), and 488–519 (DGIT…CLWM).

The protein belongs to the WD repeat DDB2/WDR76 family.

DNA-binding protein that binds to both single- and double-stranded DNA. Binds preferentially to UV-damaged DNA. May be involved in DNA-metabolic processes. The sequence is that of DNA damage-binding protein CMR1 from Phaeosphaeria nodorum (strain SN15 / ATCC MYA-4574 / FGSC 10173) (Glume blotch fungus).